Here is a 923-residue protein sequence, read N- to C-terminus: Tyrosine-protein kinase receptor torso (923 aa).

The N-terminal stretch at 1–20 (MLIFYAKYAFIFWFFVGSNQ) is a signal peptide. At 21–399 (GEMLLMDKIS…VLLSEGNMVK (379 aa)) the chain is on the extracellular side. N-linked (GlcNAc...) asparagine glycans are attached at residues N37, N63, N107, N142, N146, N287, N298, N314, N326, N342, N348, and N377. A helical membrane pass occupies residues 400–420 (LVLFIIVPICCILMLCSLTFC). Residues 421-923 (RRNRSEVQAL…EEELYLEPLN (503 aa)) are Cytoplasmic-facing. Residues 475–874 (VLLQDVLGEG…TFSALKHRLG (400 aa)) form the Protein kinase domain. Residues 481 to 489 (LGEGAFGLV) and K502 contribute to the ATP site. Position 608 is a phosphoserine (S608). The segment at 656–687 (YIPKTAEAPKDRPKRKLKPQPKKDSKQDFKSD) is disordered. The span at 676–687 (PKKDSKQDFKSD) shows a compositional bias: basic and acidic residues. D741 acts as the Proton acceptor in catalysis.

Belongs to the protein kinase superfamily. Tyr protein kinase family. Mg(2+) serves as cofactor. May be auto-phosphorylated on tyrosine residues.

The protein resides in the membrane. It catalyses the reaction L-tyrosyl-[protein] + ATP = O-phospho-L-tyrosyl-[protein] + ADP + H(+). Functionally, probable receptor tyrosine kinase which is required for determination of anterior and posterior terminal structures in the embryo. During postembryonic development, involved in the initiation of metamorphosis probably by inducing the production of ecdysone in response to prothoracicotropic hormone Ptth. Binding to Ptth stimulates activation of canonical MAPK signaling leading to ERK phosphorylation. The polypeptide is Tyrosine-protein kinase receptor torso (tor) (Drosophila melanogaster (Fruit fly)).